The sequence spans 294 residues: Protoheme IX farnesyltransferase (294 aa).

9 helical membrane passes run 24–44 (VVLLMLLTVIVGMYLAAPGWV), 48–68 (LIAFTLLGIGLCAGSAAAINH), 96–116 (ALWFAVIIGLMGLSLLILFVN), 118–138 (LTALLTFVTLIGYAGVYTGYL), 145–165 (NIVIGGLAGAAPPLLGWTAVT), 172–192 (ALLLVLIIFTWTPPHFWALAI), 224–244 (VLLLVVSLLPFVVSMSGWIYL), 245–265 (LGALVLGIRFLVWAHKLYFTD), and 268–288 (VVAMQTFRFSILYLMLLFVFL).

It belongs to the UbiA prenyltransferase family. Protoheme IX farnesyltransferase subfamily.

Its subcellular location is the cell inner membrane. It carries out the reaction heme b + (2E,6E)-farnesyl diphosphate + H2O = Fe(II)-heme o + diphosphate. The protein operates within porphyrin-containing compound metabolism; heme O biosynthesis; heme O from protoheme: step 1/1. In terms of biological role, converts heme B (protoheme IX) to heme O by substitution of the vinyl group on carbon 2 of heme B porphyrin ring with a hydroxyethyl farnesyl side group. This is Protoheme IX farnesyltransferase from Legionella pneumophila (strain Corby).